The primary structure comprises 144 residues: 3-hydroxyacyl-[acyl-carrier-protein] dehydratase FabZ (144 aa).

H52 is an active-site residue.

Belongs to the thioester dehydratase family. FabZ subfamily.

The protein resides in the cytoplasm. It catalyses the reaction a (3R)-hydroxyacyl-[ACP] = a (2E)-enoyl-[ACP] + H2O. Its function is as follows. Involved in unsaturated fatty acids biosynthesis. Catalyzes the dehydration of short chain beta-hydroxyacyl-ACPs and long chain saturated and unsaturated beta-hydroxyacyl-ACPs. The chain is 3-hydroxyacyl-[acyl-carrier-protein] dehydratase FabZ from Syntrophomonas wolfei subsp. wolfei (strain DSM 2245B / Goettingen).